A 1108-amino-acid chain; its full sequence is MVTGETLVDSQKSLINNDTLLNEKLKEDFEENVSIDVKIHEELRRALPDYEESGFQRFTWHIKSWHELDRRAVSPQFAVGSRQFKITYFPQGTLQSAGFTSIFLEYIPSEEEKLSNKYGCCCQFAFVISNPRKPSLSVANSAHCRFSPEIVDWGFTQFAELKKLLCRQAPDVPPIVEDGALLLTAYVRILKDPTGVLWHSFNDYDSKIATGYVGLKNQGATCYMNSLLQSLYIIHAFRRIVYQIPTDSPQGKDSIAYALQRCFYNLQFMNEPVSTTELTKSFGWDSLDSFMQHDVQEFNRVLQDNLERSMRDTKVENALTNLFVGKMKSYIACVNVNFESARSEDYWDIQLNVKGMKNLEDSFRSYIQVETLEGDNCYFADTYGFQEAKKGVIFESFPPILHLQLKRFEYDFERDMMIKINDRYEFPLEFDAKAFLSPEADQSQNCEYVLYGVLVHSGDLHNGHYYALLKTEKDGPWYKYDDTRVTRATLREVLEENYGGDYIMHPPFRSPVKLKRFMSAYMLLYLRKDKLDELMNPVSADEIPEHLKEALNPSIQLAELRRKERLESHLYTKVQLITPEFYSEHHEFDIADFGNAYKEETIPQFRIKKEAKFSEFIPIVAEKLGYPQECMRFWYVVKRHNCTVRVESPVNELNSTMEEVKNVWNSQGEILRLYLEITPENELSSSLTHQNTGEWNAFIFVKYFDRKSQEISGCGTLHVNKSDEIRSICPLLCERANLPKNTPLNIYEEIKPGMVDFLRLEKTFTQSELSTGDIICFEPCRPSALEDDIVNSGFDSALKLYDFLSNKVLVLFRPRFIDQDSIIEFEMLLDRRIKYDDLCIELGQKLGIGADHIRLTTCNPLTYSAGMVVPNDSNITLYEILYSSEEEMPSNVIFYETMDVSLSDLDRKRLVRLRWLVDGLANIELVEAYINKSGDINDLFGAVCERFPDSDLRKKKVRVYEVFESRYHRDLSLRTLIRTINPAATLVGEVVPLDQLQLYPEEKIVQVHHFHKDIARIHGIPFSFVIKPQEKFIDTKLRLAARTQYPESIFSVIKFCVVDFDNNRVVYLNDEDITYDVVEKLNGTLALDRAKKDSKKPNILDRAIQMKN.

Positions 55–187 (FQRFTWHIKS…DGALLLTAYV (133 aa)) constitute an MATH domain. Active-site nucleophile residues include cysteine 120 and cysteine 222. A USP domain is found at 213–528 (VGLKNQGATC…SAYMLLYLRK (316 aa)). Histidine 464 (proton acceptor) is an active-site residue.

The protein belongs to the peptidase C19 family.

It is found in the nucleus. It catalyses the reaction Thiol-dependent hydrolysis of ester, thioester, amide, peptide and isopeptide bonds formed by the C-terminal Gly of ubiquitin (a 76-residue protein attached to proteins as an intracellular targeting signal).. Its function is as follows. Hydrolase that deubiquitinates target proteins. Cleaves the UBL propeptide in sde2. In Schizosaccharomyces pombe (strain 972 / ATCC 24843) (Fission yeast), this protein is Ubiquitin carboxyl-terminal hydrolase 5 (ubp5).